Reading from the N-terminus, the 98-residue chain is Serine protease inhibitor Kazal-type 14 (98 aa).

The signal sequence occupies residues 1-23 (MVKYFQVLWSLLFSIMLHSMLLA). The Kazal-like domain maps to 35 to 98 (GLIKIKCPYK…QIRYYHTGRC (64 aa)). 3 disulfides stabilise this stretch: C41–C80, C58–C77, and C66–C98. N52 carries an N-linked (GlcNAc...) asparagine glycan.

The protein localises to the secreted. In terms of biological role, may be a serine protease inhibitor. This Rattus norvegicus (Rat) protein is Serine protease inhibitor Kazal-type 14 (Spink14).